Reading from the N-terminus, the 216-residue chain is ATP-dependent Clp protease proteolytic subunit (216 aa).

S120 serves as the catalytic Nucleophile. The active site involves H145.

It belongs to the peptidase S14 family. In terms of assembly, fourteen ClpP subunits assemble into 2 heptameric rings which stack back to back to give a disk-like structure with a central cavity, resembling the structure of eukaryotic proteasomes.

The protein localises to the cytoplasm. It carries out the reaction Hydrolysis of proteins to small peptides in the presence of ATP and magnesium. alpha-casein is the usual test substrate. In the absence of ATP, only oligopeptides shorter than five residues are hydrolyzed (such as succinyl-Leu-Tyr-|-NHMec, and Leu-Tyr-Leu-|-Tyr-Trp, in which cleavage of the -Tyr-|-Leu- and -Tyr-|-Trp bonds also occurs).. Functionally, cleaves peptides in various proteins in a process that requires ATP hydrolysis. Has a chymotrypsin-like activity. Plays a major role in the degradation of misfolded proteins. This is ATP-dependent Clp protease proteolytic subunit from Cupriavidus necator (strain ATCC 17699 / DSM 428 / KCTC 22496 / NCIMB 10442 / H16 / Stanier 337) (Ralstonia eutropha).